A 688-amino-acid polypeptide reads, in one-letter code: Glycine--tRNA ligase beta subunit (688 aa).

Belongs to the class-II aminoacyl-tRNA synthetase family. As to quaternary structure, tetramer of two alpha and two beta subunits.

It localises to the cytoplasm. It catalyses the reaction tRNA(Gly) + glycine + ATP = glycyl-tRNA(Gly) + AMP + diphosphate. The chain is Glycine--tRNA ligase beta subunit from Shewanella sp. (strain MR-4).